Reading from the N-terminus, the 74-residue chain is Antimicrobial peptide HsAp2 (74 aa).

A signal peptide spans 1-21; the sequence is MSRRLILILVLVAMLVKTMAG. A propeptide spanning residues 22 to 33 is cleaved from the precursor; the sequence is MESKWVETTYEI. Pro65 is modified (proline amide). The propeptide occupies 69–74; the sequence is AISEQT.

Belongs to the non-disulfide-bridged peptide (NDBP) superfamily. Medium-length antimicrobial peptide (group 3) family. As to expression, expressed by the venom gland.

The protein localises to the secreted. Its subcellular location is the target cell membrane. Possesses antimicrobial activity against both Gram-negative and Gram-positive bacteria, as well as against the fungus C.tropicalis. Also possesses a relatively high hemolytic activity. May act by disrupting the integrity of the bacterial cell membrane. This is Antimicrobial peptide HsAp2 from Heterometrus spinifer (Asia giant forest scorpion).